Reading from the N-terminus, the 271-residue chain is 4-hydroxy-tetrahydrodipicolinate reductase (271 aa).

NAD(+) contacts are provided by residues 10–15 (GAGGRM), Glu-36, 100–102 (GTT), and 124–127 (SGNM). The active-site Proton donor/acceptor is the His-157. His-158 contributes to the (S)-2,3,4,5-tetrahydrodipicolinate binding site. The Proton donor role is filled by Lys-161. A (S)-2,3,4,5-tetrahydrodipicolinate-binding site is contributed by 167 to 168 (GT).

The protein belongs to the DapB family.

The protein resides in the cytoplasm. It carries out the reaction (S)-2,3,4,5-tetrahydrodipicolinate + NAD(+) + H2O = (2S,4S)-4-hydroxy-2,3,4,5-tetrahydrodipicolinate + NADH + H(+). The enzyme catalyses (S)-2,3,4,5-tetrahydrodipicolinate + NADP(+) + H2O = (2S,4S)-4-hydroxy-2,3,4,5-tetrahydrodipicolinate + NADPH + H(+). The protein operates within amino-acid biosynthesis; L-lysine biosynthesis via DAP pathway; (S)-tetrahydrodipicolinate from L-aspartate: step 4/4. Its function is as follows. Catalyzes the conversion of 4-hydroxy-tetrahydrodipicolinate (HTPA) to tetrahydrodipicolinate. The polypeptide is 4-hydroxy-tetrahydrodipicolinate reductase (Rhodopseudomonas palustris (strain ATCC BAA-98 / CGA009)).